Reading from the N-terminus, the 260-residue chain is Adenosylcobinamide-GDP ribazoletransferase (260 aa).

A run of 6 helical transmembrane segments spans residues 43 to 63 (LVGT…QFIF), 64 to 84 (PASV…GGFH), 117 to 137 (GSLA…ELAL), 143 to 163 (VAGG…SIIF), 197 to 217 (VICL…TLFV), and 237 to 257 (TLGA…LLLW).

It belongs to the CobS family. Requires Mg(2+) as cofactor.

It is found in the cell inner membrane. The enzyme catalyses alpha-ribazole + adenosylcob(III)inamide-GDP = adenosylcob(III)alamin + GMP + H(+). The catalysed reaction is alpha-ribazole 5'-phosphate + adenosylcob(III)inamide-GDP = adenosylcob(III)alamin 5'-phosphate + GMP + H(+). It participates in cofactor biosynthesis; adenosylcobalamin biosynthesis; adenosylcobalamin from cob(II)yrinate a,c-diamide: step 7/7. In terms of biological role, joins adenosylcobinamide-GDP and alpha-ribazole to generate adenosylcobalamin (Ado-cobalamin). Also synthesizes adenosylcobalamin 5'-phosphate from adenosylcobinamide-GDP and alpha-ribazole 5'-phosphate. This chain is Adenosylcobinamide-GDP ribazoletransferase, found in Shewanella amazonensis (strain ATCC BAA-1098 / SB2B).